Reading from the N-terminus, the 332-residue chain is UPF0194 membrane protein YbhG (332 aa).

The first 16 residues, 1–16, serve as a signal peptide directing secretion; that stretch reads MMKKTVVIGLAVVVLA. A coiled-coil region spans residues 108-209; it reads EEIAQAAAAV…LNLQDSTLIA (102 aa).

The protein belongs to the UPF0194 family.

The protein resides in the periplasm. This chain is UPF0194 membrane protein YbhG, found in Shigella dysenteriae serotype 1 (strain Sd197).